The following is a 433-amino-acid chain: Serine--tRNA ligase (433 aa).

235–237 (TSE) serves as a coordination point for L-serine. Residue 266–268 (RSE) participates in ATP binding. Glu-289 contacts L-serine. 353–356 (EISS) provides a ligand contact to ATP. Ser-388 is a binding site for L-serine.

Belongs to the class-II aminoacyl-tRNA synthetase family. Type-1 seryl-tRNA synthetase subfamily. As to quaternary structure, homodimer. The tRNA molecule binds across the dimer.

It localises to the cytoplasm. It catalyses the reaction tRNA(Ser) + L-serine + ATP = L-seryl-tRNA(Ser) + AMP + diphosphate + H(+). It carries out the reaction tRNA(Sec) + L-serine + ATP = L-seryl-tRNA(Sec) + AMP + diphosphate + H(+). The protein operates within aminoacyl-tRNA biosynthesis; selenocysteinyl-tRNA(Sec) biosynthesis; L-seryl-tRNA(Sec) from L-serine and tRNA(Sec): step 1/1. Catalyzes the attachment of serine to tRNA(Ser). Is also able to aminoacylate tRNA(Sec) with serine, to form the misacylated tRNA L-seryl-tRNA(Sec), which will be further converted into selenocysteinyl-tRNA(Sec). In Burkholderia thailandensis (strain ATCC 700388 / DSM 13276 / CCUG 48851 / CIP 106301 / E264), this protein is Serine--tRNA ligase.